Reading from the N-terminus, the 498-residue chain is Zinc finger protein 497 (498 aa).

Residues 30–104 form a disordered region; it reads SEGAVSGGWG…LRPSPLPEEP (75 aa). 14 consecutive C2H2-type zinc fingers follow at residues 106 to 128, 134 to 156, 162 to 184, 190 to 212, 218 to 240, 246 to 268, 274 to 296, 302 to 324, 330 to 352, 358 to 380, 386 to 408, 414 to 436, 442 to 464, and 470 to 492; these read CRCGECGKAFSQGSYLLQHRRVH, YTCPECGKAFAWSSNLSQHQRIH, YACRECGKAFRAHSQLIHHQETH, FRCPDCGKSFGRSTTLVQHRRTH, YECPECGKAFSWNSNFLEHRRVH, HACRDCGKAFSQSSNLAEHLKIH, HACPDCGKAFVRVAGLRQHRRTH, FPCAECGKAFRESSQLLQHQRTH, FECAECGQAFVMGSYLAEHRRVH, HACAQCGKAFSQRSNLLSHRRTH, FACADCGKAFRGSSGLAHHRLSH, FACAECGKAFRGSSELRQHQRLH, FVCAHCSKAFVRKSELLSHRRTH, and YACGECGKPFSHRCNLNEHQKRH.

Belongs to the krueppel C2H2-type zinc-finger protein family.

It is found in the nucleus. In terms of biological role, may be involved in transcriptional regulation. The sequence is that of Zinc finger protein 497 (ZNF497) from Homo sapiens (Human).